The following is a 478-amino-acid chain: Zinc metalloproteinase/disintegrin (478 aa).

A signal peptide spans 1–20 (MIQVLLVTICLAAFPYQGSS). Positions 21–187 (IILESGNVND…PIKKASHLNL (167 aa)) are excised as a propeptide. One can recognise a Peptidase M12B domain in the interval 193–389 (RYVEIVIVVD…QKPQCILKKP (197 aa)). Disulfide bonds link Cys-304–Cys-384, Cys-344–Cys-368, and Cys-346–Cys-351. His-329 serves as a coordination point for Zn(2+). Residue Glu-330 is part of the active site. The Zn(2+) site is built by His-333 and His-339. Residues 390–408 (LRTDTVSTPVSGNELLEAR) constitute a propeptide that is removed on maturation. Residues 397–478 (TPVSGNELLE…ADCPRNVLYG (82 aa)) enclose the Disintegrin domain. Disulfide bonds link Cys-411–Cys-420, Cys-413–Cys-421, Cys-426–Cys-440, Cys-434–Cys-464, Cys-439–Cys-443, and Cys-452–Cys-471. Positions 474 to 478 (NVLYG) are excised as a propeptide.

It belongs to the venom metalloproteinase (M12B) family. P-II subfamily. P-IIa sub-subfamily. It depends on Zn(2+) as a cofactor. Expressed by the venom gland.

It is found in the secreted. In terms of biological role, snake venom zinc metalloproteinase that causes hemorrhage by provoking the degradation of the sub-endothelial matrix proteins (fibronectin, laminin, type IV collagen, nidogen, and gelatins). Its function is as follows. Displays low cytotoxicity. In vitro, inhibits cancer cell migration (human breast cancer cell line MDA-MB-231) with a significant rate after 24 hours of incubation. The chain is Zinc metalloproteinase/disintegrin (MPII) from Crotalus durissus collilineatus (Brazilian rattlesnake).